Consider the following 147-residue polypeptide: UPF0306 protein YhbP (147 aa).

Belongs to the UPF0306 family.

The polypeptide is UPF0306 protein YhbP (Salmonella agona (strain SL483)).